The sequence spans 257 residues: uncharacterized protein (257 aa).

The first 22 residues, 1-22, serve as a signal peptide directing secretion; sequence MIHSKRLKMCLCLIILSVFIGA. Residue cysteine 23 is the site of N-palmitoyl cysteine attachment. Cysteine 23 is lipidated: S-diacylglycerol cysteine.

It belongs to the staphylococcal tandem lipoprotein family.

It localises to the cell membrane. This is an uncharacterized protein from Staphylococcus aureus (strain MRSA252).